We begin with the raw amino-acid sequence, 495 residues long: Cyclic GMP-AMP synthase (495 aa).

The tract at residues 1 to 128 is disordered; it reads MAARRGKSTR…AGATELAAPA (128 aa). Positions 1–134 are DNA-binding; sequence MAARRGKSTR…AAPARMEAPP (134 aa). At Lys7 the chain carries N6-acetyllysine. Ser13 bears the Phosphoserine mark. Composition is skewed to basic and acidic residues over residues 52 to 76 and 105 to 116; these read CRRE…RAED and RAREARSARELR. Position 56 is an N6-acetyllysine (Lys56). Residue Ser57 is modified to Phosphoserine. A required for association with the cell membrane region spans residues 57–68; it reads SGPDPREKPQVR. The interval 103-134 is required for activation upon DNA viral infection; that stretch reads SCRAREARSARELRPQAGATELAAPARMEAPP. Positions 143-148 match the Nuclear export signal motif; that stretch reads LEKVRL. Lys145 bears the N6-lactoyllysine mark. Residues 147–190 form a DNA-binding region; it reads RLSRHEISEAAEVVNWVVEHLLRRLQGGESEFKGVALLRTGSYY. Residue Glu165 is modified to PolyADP-ribosyl glutamic acid. Thr186 serves as a coordination point for GTP. Ser188 carries the post-translational modification Phosphoserine. Ser188 is an ATP binding site. Tyr190 carries the phosphotyrosine modification. Residues Glu200 and Asp202 each contribute to the Mg(2+) site. Asp202 lines the 2',3'-cGAMP pocket. Lys206 is covalently cross-linked (Glycyl lysine isopeptide (Lys-Gly) (interchain with G-Cter in SUMO)). Lys260 is covalently cross-linked (Glycyl lysine isopeptide (Lys-Gly) (interchain with G-Cter in ubiquitin)). At Glu261 the chain carries 5-glutamyl polyglutamate. The Nuclear localization signal signature appears at 268-278; sequence GVTVERKRRGS. At Ser278 the chain carries Phosphoserine. GTP is bound at residue Asp294. Asp294 is a Mg(2+) binding site. Residue Asp294 participates in 2',3'-cGAMP binding. The tract at residues 316–357 is interaction with collided ribosomes; the sequence is SQWLGAKVKNNLKRQPFYLVPKHAKEGSGFQEETWRLSFSHI. Lys322 participates in a covalent cross-link: Glycyl lysine isopeptide (Lys-Gly) (interchain with G-Cter in SUMO); alternate. A Glycyl lysine isopeptide (Lys-Gly) (interchain with G-Cter in ubiquitin); alternate cross-link involves residue Lys322. 2',3'-cGAMP-binding residues include Lys337 and Arg351. GTP is bound at residue 351 to 358; it reads RLSFSHIE. Glu358 lines the ATP pocket. Lys359 is subject to N6-acetyllysine. Lys359 participates in a covalent cross-link: Glycyl lysine isopeptide (Lys-Gly) (interchain with G-Cter in SUMO); alternate. A Glycyl lysine isopeptide (Lys-Gly) (interchain with G-Cter in ubiquitin); alternate cross-link involves residue Lys359. The segment at 359 to 382 is DNA-binding; sequence KDILKNHGQSKTCCEIDGVKCCRK. His365 lines the Zn(2+) pocket. N6-acetyllysine is present on Lys369. A Glycyl lysine isopeptide (Lys-Gly) (interchain with G-Cter in SUMO) cross-link involves residue Lys369. The Zn(2+) site is built by Cys371, Cys372, and Cys379. S-palmitoyl cysteine attachment occurs at residues Cys379 and Cys380. Residues Lys386, Lys389, Lys396, and Lys397 each participate in a glycyl lysine isopeptide (Lys-Gly) (interchain with G-Cter in ubiquitin) cross-link. Lys389 bears the N6-acetyllysine mark. Lys389 is a binding site for ATP. Ser410 is subject to Phosphoserine. An ATP-binding site is contributed by 410 to 414; the sequence is SYHVK. Cys449 is lipidated: S-palmitoyl cysteine. Lys481 carries the N6-methyllysine modification.

It belongs to the mab-21 family. Monomer in the absence of DNA. Homodimer in presence of dsDNA: forms a 2:2 dimer with two enzymes binding to two DNA molecules. Interacts with nucleosomes; interaction is mainly mediated via histones H2A and H2B and inactivates the nucleotidyltransferase activity by blocking DNA-binding and subsequent activation. Interacts with PQBP1 (via WW domain). Interacts with TRIM14; this interaction recruits USP14, leading to deubiquitinate and stabilize CGAS and promote type I interferon production. Interacts with ZCCHC3; promoting sensing of dsDNA by CGAS. Interacts (when not monomethylated) with (poly-ADP-ribosylated) PARP1; interaction takes place in the nucleus and prevents the formation of the PARP1-TIMELESS complex. Interacts (when monomethylated) with SGF29; interaction with SGF29 prevents interaction with PARP1. Interacts with PCBP2; preventing the formation of liquid-like droplets in which CGAS is activated. Interacts with IRGM; promoting CGAS degradation. Mg(2+) serves as cofactor. Requires Mn(2+) as cofactor. It depends on Zn(2+) as a cofactor. In terms of processing, the N-terminal disordered part (1-134) is phosphorylated by AURKB during the G2-M transition, blocking CGAS liquid phase separation and preventing activation. Phosphorylation at Tyr-190 by BLK promotes cytosolic retention. Localizes into the nucleus following dephosphorylation at Tyr-190. Phosphorylation at Ser-410 activates the nucleotidyltransferase activity. Dephosphorylation at Ser-410 by PPP6C impairs its ability to bind GTP, thereby inactivating it. Phosphorylation at Ser-188 by PRKDC inhibits its cyclic GMP-AMP synthase activity by impairing homodimerization and activation. Phosphorylation at Ser-278 by AKT (AKT1, AKT2 or AKT3) suppresses the nucleotidyltransferase activity. Phosphorylation at Ser-278 by CDK1 during mitosis leads to its inhibition, thereby preventing CGAS activation by self-DNA during mitosis. Dephosphorylated at Ser-278 by protein phosphatase PP1 upon mitotic exit. Ubiquitinated at Lys-389 via 'Lys-48'-linked polyubiquitin chains, leading to its SQSTM1-mediated autophagic degradation. Interaction with TRIM14 promotes recruitment of USP14, leading to deubiquitinate Lys-389 and stabilize CGAS. Ubiquitinated at Lys-359 by RNF185 via 'Lys-27'-linked polyubiquitination, promoting CGAS cyclic GMP-AMP synthase activity. Monoubiquitination at Lys-322 by TRIM56 promotes oligomerization and subsequent activation. Monoubiquitination by TRIM41 promotes CGAS activation. Ubiquitination at Lys-260 via 'Lys-48'-linked polyubiquitination promotes its degradation. Deubiquitination at Lys-260 by USP29 promotes its stabilization. Deubiquitinated by USP27X, promoting its stabilization. Ubiquitinated at Lys-386 via 'Lys-63'-linked polyubiquitin chains by MARCHF8, leading to the inhibition of its DNA binding ability. In cycling cells, nucleosome-bound CGAS is ubiquitinated at Lys-396 and Lys-397 via 'Lys-48'-linked polyubiquitin chains by the ECS(SPSB3) complex, leading to its degradation: ubiquitination and degradation of nuclear CGAS during G1 and G2 phases is required to promote low intranuclear CGAS abundance before the next mitotic cycle. Post-translationally, sumoylated at Lys-206 by TRIM38 in uninfected cells and during the early phase of viral infection, promoting its stability by preventing ubiquitination at Lys-260 and subsequent degradation. Desumoylated by SENP2 during the late phase of viral infection. Sumoylation at Lys-322, Lys-359 and Lys-369 prevents DNA-binding, oligomerization and nucleotidyltransferase activity. Desumoylation at Lys-322, Lys-359 and Lys-369 by SENP7 relieves inhibition and activates CGAS. In terms of processing, polyglutamylated by TTLL6 at Glu-261, leading to impair DNA-binding activity. Deglutamylated by AGBL5/CCP5 and AGBL6/CCP6. Acetylation at Lys-359, Lys-369 and Lys-389 inhibits the cyclic GMP-AMP synthase activity. Deacetylated upon cytosolic DNA challenge such as viral infections. Acetylation by KAT5 increases the cyclic GMP-AMP synthase activity by promoting DNA-binding and subsequent activation. Post-translationally, proteolytically cleaved by apoptotic caspases during apoptosis, leading to its inactivation. The damage of the nucleus and the mitochondria during apoptosis leads to leakage of nuclear and mitochondrial DNA, which activate CGAS: cleavage and inactivation during apoptosis in required to prevent cytokine overproduction. Cleaved by CASP7 and CASP3 during virus-induced apoptosis, thereby inactivating it and preventing cytokine overproduction. Cleaved by CASP1 upon DNA virus infection; the cleavage impairs cGAMP production. Also cleaved by the pyroptotic CASP4 during non-canonical inflammasome activation; does not cut at the same sites than CASP1. In terms of processing, degraded via selective autophagy following interaction with IRGM. IRGM promotes CGAS recruitment to autophagosome membranes, promoting its SQSTM1/p62-dependent autophagic degradation. Poly-ADP-ribosylation at Glu-165 by PARP1 impairs DNA-binding, thereby preventing the cyclic GMP-AMP synthase activity. Post-translationally, palmitoylation at Cys-449 by ZDHHC18 impairs DNA-binding, thereby preventing the cyclic GMP-AMP synthase activity. Palmitoylation at Cys-379 and Cys-380 by ZDHHC9 promotes homodimerization and cyclic GMP-AMP synthase activity. Depalmitoylation at Cys-379 and Cys-380 by LYPLAL1 impairs homodimerization and cyclic GMP-AMP synthase activity. In terms of processing, monomethylated at Lys-481 by SETD7. Monomethylation promotes interaction with SGF29, preventing interaction between PARP1 nad SGF29. Demethylation by RIOX1 promotes interaction with PARP1, followed by PARP1 inactivation. Lactylation by AARS2 prevents ability to undergo liquid-liquid phase separation (LLPS), thereby inhibiting CGAS activation.

Its subcellular location is the nucleus. It is found in the chromosome. It localises to the cell membrane. The protein localises to the cytoplasm. The protein resides in the cytosol. It carries out the reaction GTP + ATP = 2',3'-cGAMP + 2 diphosphate. The enzyme catalyses GTP + ATP = pppGp(2'-5')A + diphosphate. The catalysed reaction is pppGp(2'-5')A = 2',3'-cGAMP + diphosphate. The enzyme activity is strongly increased by double-stranded DNA (dsDNA), but not by single-stranded DNA or RNA. DNA-binding induces the formation of liquid-like droplets in which CGAS is activated. Liquid-like droplets also create a selective environment that restricts entry of negative regulators, such as TREX1 or BANF1/BAF, allowing sensing of DNA. A number of mechanisms exist to restrict its activity toward self-DNA. The nucleotidyltransferase activity is inhibited in the nucleus via its association with nucleosomes: interacts with the acidic patch of histones H2A and H2B, thereby blocking DNA-binding and subsequent activation. CGAS is also inactive when associated with mitotic chromatin. Chromatin-bound CGAS cannot be activated by exogenous DNA in mitotic cells: phosphorylation of the N-terminal disordered part by AURKB during the G2-M transition blocks CGAS liquid phase separation and activation. Activity toward self-DNA is inhibited by BANF1/BAF upon acute loss of nuclear membrane integrity: BANF1/BAF acts by outcompeting CGAS for DNA-binding, thereby preventing CGAS activation. DNA-induced activation at micronuclei is also limited by TREX1, which degrades micronuclear DNA upon nuclear envelope rupture, thereby preventing CGAS activation. CGAS can be released from nucleosomes and activated by MRE11 component of the MRN complex, which displaces CGAS from acidic-patch-mediated sequestration. Acetylation at Lys-359, Lys-369 and Lys-389 inhibits the cyclic GMP-AMP synthase activity. Acetylation by KAT5 increases the cyclic GMP-AMP synthase activity by promoting DNA-binding and subsequent activation. Phosphorylation at Ser-278 suppresses the nucleotidyltransferase activity. Phosphorylation at Ser-410 promotes the cyclic GMP-AMP synthase activity. Phosphorylation at Ser-188 inhibits its cyclic GMP-AMP synthase activity. Ubiquitination at Lys-359 via 'Lys-27'-linked polyubiquitination enhances the cyclic GMP-AMP synthase activity. Monoubiquitination at Lys-322 promotes oligomerization and subsequent activation. Sumoylation at Lys-322, Lys-359 and Lys-369 prevents DNA-binding, oligomerization and nucleotidyltransferase activity. The enzyme activity is impaired by the cleavage by CASP1. In addition to DNA, also activated by collided ribosomes upon translation stress: specifically binds collided ribosomes, promoting its activation and triggering type-I interferon production. Nucleotidyltransferase that catalyzes the formation of cyclic GMP-AMP (2',3'-cGAMP) from ATP and GTP and plays a key role in innate immunity. Catalysis involves both the formation of a 2',5' phosphodiester linkage at the GpA step and the formation of a 3',5' phosphodiester linkage at the ApG step, producing c[G(2',5')pA(3',5')p]. Acts as a key DNA sensor: directly binds double-stranded DNA (dsDNA), inducing the formation of liquid-like droplets in which CGAS is activated, leading to synthesis of 2',3'-cGAMP, a second messenger that binds to and activates STING1, thereby triggering type-I interferon production. Preferentially binds long dsDNA (around 45 bp) and forms ladder-like networks that function cooperatively to stabilize individual cGAS-dsDNA complexes. Acts as a key foreign DNA sensor, the presence of double-stranded DNA (dsDNA) in the cytoplasm being a danger signal that triggers the immune responses. Has antiviral activity by sensing the presence of dsDNA from DNA viruses in the cytoplasm. Also acts as an innate immune sensor of infection by retroviruses by detecting the presence of reverse-transcribed DNA in the cytosol. Detection of retroviral reverse-transcribed DNA in the cytosol may be indirect and be mediated via interaction with PQBP1, which directly binds reverse-transcribed retroviral DNA. Also detects the presence of DNA from bacteria. 2',3'-cGAMP can be transferred from producing cells to neighboring cells through gap junctions, leading to promote STING1 activation and convey immune response to connecting cells. 2',3'-cGAMP can also be transferred between cells by virtue of packaging within viral particles contributing to IFN-induction in newly infected cells in a cGAS-independent but STING1-dependent manner. Also senses the presence of neutrophil extracellular traps (NETs) that are translocated to the cytosol following phagocytosis, leading to synthesis of 2',3'-cGAMP. In addition to foreign DNA, can also be activated by endogenous nuclear or mitochondrial DNA. When self-DNA leaks into the cytosol during cellular stress (such as mitochondrial stress, DNA damage, mitotic arrest or senescence), or is present in form of cytosolic micronuclei, CGAS is activated leading to a state of sterile inflammation. Acts as a regulator of cellular senescence by binding to cytosolic chromatin fragments that are present in senescent cells, leading to trigger type-I interferon production via STING1 and promote cellular senescence. Also involved in the inflammatory response to genome instability and double-stranded DNA breaks: acts by localizing to micronuclei arising from genome instability. Micronuclei, which are frequently found in cancer cells, consist of chromatin surrounded by their own nuclear membrane: following breakdown of the micronuclear envelope, a process associated with chromothripsis, CGAS binds self-DNA exposed to the cytosol, leading to 2',3'-cGAMP synthesis and subsequent activation of STING1 and type-I interferon production. In a healthy cell, CGAS is however kept inactive even in cellular events that directly expose it to self-DNA, such as mitosis, when cGAS associates with chromatin directly after nuclear envelope breakdown or remains in the form of postmitotic persistent nuclear cGAS pools bound to chromatin. Nuclear CGAS is inactivated by chromatin via direct interaction with nucleosomes, which block CGAS from DNA binding and thus prevent CGAS-induced autoimmunity. Also acts as a suppressor of DNA repair in response to DNA damage: inhibits homologous recombination repair by interacting with PARP1, the CGAS-PARP1 interaction leading to impede the formation of the PARP1-TIMELESS complex. In addition to DNA, also sense translation stress: in response to translation stress, translocates to the cytosol and associates with collided ribosomes, promoting its activation and triggering type-I interferon production. This is Cyclic GMP-AMP synthase from Sus scrofa (Pig).